The primary structure comprises 142 residues: Protein Turandot X (142 aa).

The first 22 residues, 1 to 22 (MGLSIGSLLICVFLGIVPFATA), serve as a signal peptide directing secretion.

The protein belongs to the Turandot family.

The protein resides in the secreted. A humoral factor that may play a role in stress tolerance. The sequence is that of Protein Turandot X from Drosophila melanogaster (Fruit fly).